A 200-amino-acid chain; its full sequence is Inducible T-cell costimulator (200 aa).

The N-terminal stretch at 1-20 (MKPYFSCVFVFCFLIKLLTG) is a signal peptide. Topologically, residues 21–145 (ELNDLANHRM…LCCQLKLWLP (125 aa)) are extracellular. The region spanning 30-133 (MFSFHDGGVQ…LSGGYLLIYE (104 aa)) is the Ig-like V-type domain. Disulfide bonds link cysteine 42–cysteine 109 and cysteine 63–cysteine 83. Residues asparagine 89 and asparagine 123 are each glycosylated (N-linked (GlcNAc...) asparagine). The helical transmembrane segment at 146-166 (VGCAAFVAALLFGCIFIVWFA) threads the bilayer. The Cytoplasmic portion of the chain corresponds to 167-200 (KKKYRSSVHDPNSEYMFMAAVNTNKKSRLAGMTS).

Homodimer; disulfide-linked. Interacts with ICOSLG. Interacts with PIK3R1. Interacts with TBK1; this interaction is critical for the maturation of T follicular regulatory cells. Post-translationally, N-glycosylated. In terms of tissue distribution, strongly expressed in the spleen and lung. Lower expression seen in liver, kidney and testis.

It localises to the cell membrane. Stimulatory receptor expressed in activated or antigen-experienced T-cells that plays an important role in the immune response. Upon binding to its ligand ICOSL expressed on antigen presenting cells (APCs), delivers costimulatory signals that enhances all basic T-cell responses to a foreign antigen, namely proliferation, secretion of lymphokines including IL10, up-regulation of molecules that mediate cell-cell interaction, and effective help for antibody secretion by B-cells. Also acts as a costimulatory receptor critical for the differentiation of T follicular regulatory cells upon immune challenges such as viral infection. Mechanistically, potentiates TCR-induced calcium flux by augmenting PLCG1 activation and actin remodeling. In addition, activates PI3K signaling pathways independently of calcium flux. Essential both for efficient interaction between T and B-cells and for normal antibody responses to T-cell dependent antigens. Prevents the apoptosis of pre-activated T-cells. Plays a critical role in CD40-mediated class switching of immunoglobin isotypes. The sequence is that of Inducible T-cell costimulator (Icos) from Rattus norvegicus (Rat).